A 214-amino-acid chain; its full sequence is tRNA (guanine-N(7)-)-methyltransferase (214 aa).

4 residues coordinate S-adenosyl-L-methionine: glutamate 44, glutamate 69, aspartate 96, and aspartate 118. Aspartate 118 is an active-site residue. Lysine 122 is a binding site for substrate. An interaction with RNA region spans residues 124–129 (RHEKRR). Substrate is bound by residues aspartate 154 and 192-195 (TEYE).

This sequence belongs to the class I-like SAM-binding methyltransferase superfamily. TrmB family.

It carries out the reaction guanosine(46) in tRNA + S-adenosyl-L-methionine = N(7)-methylguanosine(46) in tRNA + S-adenosyl-L-homocysteine. The protein operates within tRNA modification; N(7)-methylguanine-tRNA biosynthesis. Functionally, catalyzes the formation of N(7)-methylguanine at position 46 (m7G46) in tRNA. This chain is tRNA (guanine-N(7)-)-methyltransferase, found in Lactiplantibacillus plantarum (strain ATCC BAA-793 / NCIMB 8826 / WCFS1) (Lactobacillus plantarum).